The primary structure comprises 1032 residues: Histone lysine demethylase PHF8 (1032 aa).

Residues 5 to 56 (PVYCLCRLPYDVTRFMIECDVCQDWFHGSCVGVEEDKAAEIDLYHCPNCQVT) form a PHD-type zinc finger. The segment at 65 to 83 (RRGAVKHADVGLGRDSGRP) is linker. The JmjC domain maps to 199-355 (FSDTRLSNLV…MQLRAYEIEK (157 aa)). Thr248 serves as a coordination point for substrate. Residues His251 and Asp253 each coordinate Fe cation. Lys268 contributes to the substrate binding site. His323 is a Fe cation binding site. Disordered stretches follow at residues 455–515 (SGTP…KGKE), 577–660 (QGKK…VDFD), 697–857 (LDSA…REGA), 875–923 (QQEQ…EPPV), and 943–1015 (EYTA…ATAK). Polar residues predominate over residues 473–483 (QLNTPLTFSQH). Low complexity predominate over residues 583-592 (AGSANGAGSS). The span at 620 to 632 (PRRRPSLPSKKKL) shows a compositional bias: basic residues. Residues 644–655 (PCSDPHRIREPG) show a composition bias toward basic and acidic residues. Low complexity-rich tracts occupy residues 699 to 710 (SALSEEAPASPS) and 724 to 739 (PPSS…PLSI). Residues 774-784 (PGKRPIKRPAR) are compositionally biased toward basic residues. Basic and acidic residues predominate over residues 848–857 (KQERPVREGA). The span at 882–891 (ITKRKYTKKK) shows a compositional bias: basic residues. Over residues 970-990 (SRRPSLSPQNSSSYSPSAPSP) the composition is skewed to low complexity.

Belongs to the JHDM1 histone demethylase family. JHDM1D subfamily. The cofactor is Fe(2+).

The protein localises to the nucleus. Its subcellular location is the nucleolus. The enzyme catalyses N(6),N(6)-dimethyl-L-lysyl(36)-[histone H3] + 2 2-oxoglutarate + 2 O2 = L-lysyl(36)-[histone H3] + 2 formaldehyde + 2 succinate + 2 CO2. The catalysed reaction is N(6),N(6)-dimethyl-L-lysyl(9)-[histone H3] + 2 2-oxoglutarate + 2 O2 = L-lysyl(9)-[histone H3] + 2 formaldehyde + 2 succinate + 2 CO2. Functionally, histone lysine demethylase with selectivity for the di- and monomethyl states that plays a key role cell cycle progression, rDNA transcription and brain development. Demethylates mono- and dimethylated histone H3 'Lys-9' residue (H3K9Me1 and H3K9Me2), dimethylated H3 'Lys-27' (H3K27Me2) and monomethylated histone H4 'Lys-20' residue (H4K20Me1). Acts as a transcription activator as H3K9Me1, H3K9Me2, H3K27Me2 and H4K20Me1 are epigenetic repressive marks. Involved in cell cycle progression by being required to control G1-S transition. Acts as a coactivator of rDNA transcription, by activating polymerase I (pol I) mediated transcription of rRNA genes. Has activity toward H4K20Me1 only when nucleosome is used as a substrate and when not histone octamer is used as substrate. Required for brain development, probably by regulating expression of neuron-specific genes. The sequence is that of Histone lysine demethylase PHF8 (phf8) from Danio rerio (Zebrafish).